Reading from the N-terminus, the 690-residue chain is Lipase 2 (690 aa).

The N-terminal stretch at 1-37 (MLRGQEERKYSIRKYSIGVVSVLAATMFVVSSHEAQA) is a signal peptide. Positions 52–71 (LNQPGEQGNAITSHQMQSGK) are enriched in polar residues. The interval 52 to 266 (LNQPGEQGNA…KPTDKNTDNK (215 aa)) is disordered. Residues 72-81 (QLDDMHKENG) are compositionally biased toward basic and acidic residues. Polar residues-rich tracts occupy residues 82–114 (KSGTVTEGKDTLQSSKHQSTQNSKTIRTQNDNQ), 124–171 (SKQS…QPSI), and 185–206 (PTSTTPPSNDKTAPKSTKAQDA). Composition is skewed to basic and acidic residues over residues 225 to 237 (IDAKQDDTVRQSE) and 257 to 266 (KPTDKNTDNK). Active-site charge relay system residues include S412 and H645.

Belongs to the AB hydrolase superfamily. Lipase family.

Its subcellular location is the secreted. It carries out the reaction a triacylglycerol + H2O = a diacylglycerol + a fatty acid + H(+). In Staphylococcus aureus (strain NCTC 8325 / PS 47), this protein is Lipase 2 (lip2).